The sequence spans 149 residues: Alpha-crystallin A chain (149 aa).

One can recognise a sHSP domain in the interval 41–149; sequence LFRSVLESGI…DPTHSERPIP (109 aa). Residues H89, E91, H96, and H143 each contribute to the Zn(2+) site.

Belongs to the small heat shock protein (HSP20) family. Heteropolymer composed of three CRYAA and one CRYAB subunits. Inter-subunit bridging via zinc ions enhances stability, which is crucial as there is no protein turn over in the lens. Can also form homodimers and homotetramers (dimers of dimers) which serve as the building blocks of homooligomers. Within homooligomers, the zinc-binding motif is created from residues of 3 different molecules. His-89 and Glu-91 from one molecule are ligands of the zinc ion, and His-96 and His-143 residues from additional molecules complete the site with tetrahedral coordination geometry.

It is found in the cytoplasm. The protein resides in the nucleus. Its function is as follows. Contributes to the transparency and refractive index of the lens. May act as a chaperone, preventing aggregation of various proteins under a wide range of stress conditions. The sequence is that of Alpha-crystallin A chain (CRYAA) from Anas platyrhynchos (Mallard).